A 276-amino-acid chain; its full sequence is Undecaprenyl-diphosphatase (276 aa).

The next 8 membrane-spanning stretches (helical) occupy residues 1–21, 39–59, 84–104, 115–135, 159–179, 190–210, 222–242, and 253–273; these read MSWL…FLPV, AGAS…LVYF, YWLG…GLLF, LWLV…AEYA, LALV…LFLG, FLLA…DAFA, QLLV…AWFL, and FVGY…TGVV.

Belongs to the UppP family.

It localises to the cell membrane. The enzyme catalyses di-trans,octa-cis-undecaprenyl diphosphate + H2O = di-trans,octa-cis-undecaprenyl phosphate + phosphate + H(+). Catalyzes the dephosphorylation of undecaprenyl diphosphate (UPP). Confers resistance to bacitracin. The protein is Undecaprenyl-diphosphatase of Mycolicibacterium gilvum (strain PYR-GCK) (Mycobacterium gilvum (strain PYR-GCK)).